The following is a 288-amino-acid chain: Protease HtpX homolog (288 aa).

Transmembrane regions (helical) follow at residues Thr7 to Gly27 and Gln29 to Ser49. His131 contacts Zn(2+). Residue Glu132 is part of the active site. Position 135 (His135) interacts with Zn(2+). 2 helical membrane-spanning segments follow: residues Ile141–Ala161 and Ile177–Ile197. Glu202 lines the Zn(2+) pocket.

This sequence belongs to the peptidase M48B family. It depends on Zn(2+) as a cofactor.

It is found in the cell inner membrane. The protein is Protease HtpX homolog of Polynucleobacter necessarius subsp. necessarius (strain STIR1).